Reading from the N-terminus, the 305-residue chain is Probable branched-chain-amino-acid aminotransferase (305 aa).

Lysine 156 carries the post-translational modification N6-(pyridoxal phosphate)lysine.

This sequence belongs to the class-IV pyridoxal-phosphate-dependent aminotransferase family. Pyridoxal 5'-phosphate is required as a cofactor.

It carries out the reaction L-leucine + 2-oxoglutarate = 4-methyl-2-oxopentanoate + L-glutamate. The enzyme catalyses L-isoleucine + 2-oxoglutarate = (S)-3-methyl-2-oxopentanoate + L-glutamate. It catalyses the reaction L-valine + 2-oxoglutarate = 3-methyl-2-oxobutanoate + L-glutamate. The protein operates within amino-acid biosynthesis; L-isoleucine biosynthesis; L-isoleucine from 2-oxobutanoate: step 4/4. It participates in amino-acid biosynthesis; L-leucine biosynthesis; L-leucine from 3-methyl-2-oxobutanoate: step 4/4. It functions in the pathway amino-acid biosynthesis; L-valine biosynthesis; L-valine from pyruvate: step 4/4. In terms of biological role, acts on leucine, isoleucine and valine. In Synechocystis sp. (strain ATCC 27184 / PCC 6803 / Kazusa), this protein is Probable branched-chain-amino-acid aminotransferase (ilvE).